A 490-amino-acid polypeptide reads, in one-letter code: 7-ethoxycoumarin O-deethylase (490 aa).

Cys432 is a binding site for heme.

Belongs to the cytochrome P450 family. Heme serves as cofactor.

Its function is as follows. Capable of dealkylating a model xenobiotic compound, 7-ethoxycoumarin. Metabolizes with high efficiency a wide range of xenobiotics, including alkoxycoumarins, alkoxyresorufins, and several herbicides of the class of phenylureas. Catalyzes the double N-dealkylation (oxidative N-demethylation) of phenylureas such as chlortoluron and isoproturon with turnover rates comparable to those reported for physiological substrates and produces non-phytotoxic compounds. Could be used for control of herbicide tolerance and selectivity, as well as soil and groundwater bioremediation. This chain is 7-ethoxycoumarin O-deethylase (CYP76B1), found in Helianthus tuberosus (Jerusalem artichoke).